Consider the following 75-residue polypeptide: Small ribosomal subunit protein bS18 (75 aa).

The protein belongs to the bacterial ribosomal protein bS18 family. Part of the 30S ribosomal subunit. Forms a tight heterodimer with protein bS6.

Its function is as follows. Binds as a heterodimer with protein bS6 to the central domain of the 16S rRNA, where it helps stabilize the platform of the 30S subunit. This Teredinibacter turnerae (strain ATCC 39867 / T7901) protein is Small ribosomal subunit protein bS18.